Here is a 269-residue protein sequence, read N- to C-terminus: Putative pyruvate, phosphate dikinase regulatory protein (269 aa).

An ADP-binding site is contributed by 151-158 (GVSRSSKT).

It belongs to the pyruvate, phosphate/water dikinase regulatory protein family. PDRP subfamily.

The enzyme catalyses N(tele)-phospho-L-histidyl/L-threonyl-[pyruvate, phosphate dikinase] + ADP = N(tele)-phospho-L-histidyl/O-phospho-L-threonyl-[pyruvate, phosphate dikinase] + AMP + H(+). The catalysed reaction is N(tele)-phospho-L-histidyl/O-phospho-L-threonyl-[pyruvate, phosphate dikinase] + phosphate + H(+) = N(tele)-phospho-L-histidyl/L-threonyl-[pyruvate, phosphate dikinase] + diphosphate. Its function is as follows. Bifunctional serine/threonine kinase and phosphorylase involved in the regulation of the pyruvate, phosphate dikinase (PPDK) by catalyzing its phosphorylation/dephosphorylation. The polypeptide is Putative pyruvate, phosphate dikinase regulatory protein (Geobacter sulfurreducens (strain ATCC 51573 / DSM 12127 / PCA)).